A 425-amino-acid polypeptide reads, in one-letter code: Inhibin beta A chain (425 aa).

An N-terminal signal peptide occupies residues 1-20; it reads MPLLWLRGFLLASCWIIVRS. Positions 21–309 are excised as a propeptide; sequence SPTPGSEGHS…EDHPHRRRRR (289 aa). An N-linked (GlcNAc...) asparagine glycan is attached at asparagine 165. Residues 260–289 are disordered; it reads KKRKEEEGEGKKRDGEGGAGGDEEKEQSHR. The span at 263-275 shows a compositional bias: basic and acidic residues; sequence KEEEGEGKKRDGE. Cystine bridges form between cysteine 313–cysteine 321, cysteine 320–cysteine 390, cysteine 349–cysteine 422, and cysteine 353–cysteine 424.

The protein belongs to the TGF-beta family. In terms of assembly, dimeric, linked by one or more disulfide bonds. Inhibin A is a dimer of alpha/INHA and beta-A/INHBA. Activin A is a homodimer of beta-A/INHBA. Activin AB is a dimer of beta-A/INHBA and beta-B/INHBB. Interacts with FST and FSTL3; these interactions prevent activin A interaction to its type II receptor. Activin A interacts with ACVR2A. Activin A interacts with BMPR2. Inhibin A interacts with ACVR1; this interaction creates a non-signaling complex (NSC) that inhibits ACVR1-mediated BMP signaling. Inhibin A interacts with ACVR2A.

It localises to the secreted. In terms of biological role, inhibins/activins are involved in regulating a number of diverse functions such as hypothalamic and pituitary hormone secretion, gonadal hormone secretion, germ cell development and maturation, erythroid differentiation, insulin secretion, nerve cell survival, embryonic axial development or bone growth, depending on their subunit composition. Its function is as follows. Activin A is a homodimer of INHBA that plays a role in several essential biological processes including embryonic development, stem cell maintenance and differentiation, haematopoiesis, cell proliferation and tissue fibrosis. Signals through type I (such as ACVR1B or ACVR1C) and type II receptors (such as ACVR2A, ACVR2B or BMPR2) which, upon ligand binding, phosphorylate SMAD2 and SMAD3 intracellular signaling mediators that form a complex with SMAD4, translocate to the nucleus and modulate gene expression. Can also activate alternative non-canonical intracellular signaling pathways including the p38 MAPK, extracellular signal-regulated kinases 1/2 (ERK1/2) and c-Jun N-terminal kinases (JNKs) to modulate cell migration and differentiation. Alternatively, promotes osteoblastic differentiation via ACVRL1-SMAD1/5/9 pathway. In addition, can engage the type I receptor ACVR1 to form an ACVR1-activin A-type II receptor non-signaling complex (NSC) that renders receptors unavailable for engagement with BMPs, hence resulting in an apparent inhibition of ACVR1-mediated BMP signaling. Functionally, inhibin A is a dimer of alpha/INHA and beta-A/INHBA that functions as a feedback regulator in the hypothalamic-pituitary-gonadal (HPG) axis. Inhibits the secretion of FSH from the anterior pituitary gland by acting on pituitary gonadotrope cells. Antagonizes activin A by binding to the proteoglycan, betaglycan, and forming a stable complex with and, thereby, sequestering type II activin receptors while excluding type I receptor. This Ovis aries (Sheep) protein is Inhibin beta A chain (INHBA).